Consider the following 152-residue polypeptide: Transcription elongation factor Spt5 (152 aa).

The region spanning 99–129 (EGDLVEVISGPFRGMQAQVVRVESTKNEVVL) is the KOW domain.

Belongs to the archaeal Spt5 family. Heterodimer composed of Spt4 and Spt5. Interacts with RNA polymerase (RNAP).

Functionally, stimulates transcription elongation. In Sulfolobus acidocaldarius (strain ATCC 33909 / DSM 639 / JCM 8929 / NBRC 15157 / NCIMB 11770), this protein is Transcription elongation factor Spt5.